A 217-amino-acid polypeptide reads, in one-letter code: Pyrrolidone-carboxylate peptidase (217 aa).

Active-site residues include E78, C141, and H168.

This sequence belongs to the peptidase C15 family. In terms of assembly, homotetramer.

Its subcellular location is the cytoplasm. The catalysed reaction is Release of an N-terminal pyroglutamyl group from a polypeptide, the second amino acid generally not being Pro.. Its function is as follows. Removes 5-oxoproline from various penultimate amino acid residues except L-proline. In Treponema denticola (strain ATCC 35405 / DSM 14222 / CIP 103919 / JCM 8153 / KCTC 15104), this protein is Pyrrolidone-carboxylate peptidase.